We begin with the raw amino-acid sequence, 128 residues long: Large ribosomal subunit protein bL12c (128 aa).

It belongs to the bacterial ribosomal protein bL12 family. As to quaternary structure, homodimer. Part of the ribosomal stalk of the 50S ribosomal subunit. Forms a multimeric L10(L12)X complex, where L10 forms an elongated spine to which 2 to 4 L12 dimers bind in a sequential fashion. Binds GTP-bound translation factors.

It is found in the plastid. It localises to the chloroplast. Forms part of the ribosomal stalk which helps the ribosome interact with GTP-bound translation factors. Is thus essential for accurate translation. The sequence is that of Large ribosomal subunit protein bL12c from Phaeodactylum tricornutum (strain CCAP 1055/1).